Reading from the N-terminus, the 240-residue chain is Arylmalonate decarboxylase (240 aa).

It catalyses the reaction 2-aryl-2-methylmalonate + H(+) = 2-arylpropionate + CO2. The chain is Arylmalonate decarboxylase from Bordetella bronchiseptica (Alcaligenes bronchisepticus).